The sequence spans 272 residues: MAQASGLMNGKRGVIMGVANNRSIAWGIAKALAEAGAEIALTWQGDALKKRVEPLAQELGAFMAGHCDVTDLATIDAVFSALEEKWGKIDFVVHAIAFSDKDELTGRYLDTSRDNFARTMDISVYSFTAVAARADRVMNDGGSILTLTYYGAEKVMPHYNVMGVAKAALEASVRYLAVDLGNRGIRVNAISAGPIKTLAASGIGDFRYILKWNEYNAPLKRTVSIEEVGNSALYLLSDLSSGVTGEVHHVDSGYHTVGMKAVDAPDISVLKD.

NAD(+) contacts are provided by residues G17, 23-24 (SI), Q44, 68-69 (DV), and I96. Residues Y149 and Y159 each act as proton acceptor in the active site. Residues K166 and 195–199 (IKTLA) each bind NAD(+).

Belongs to the short-chain dehydrogenases/reductases (SDR) family. FabI subfamily.

It is found in the cell inner membrane. It catalyses the reaction a 2,3-saturated acyl-[ACP] + NAD(+) = a (2E)-enoyl-[ACP] + NADH + H(+). It functions in the pathway lipid metabolism; fatty acid biosynthesis. The polypeptide is Enoyl-[acyl-carrier-protein] reductase [NADH] 1 (fabI1) (Rhizobium meliloti (strain 1021) (Ensifer meliloti)).